An 88-amino-acid chain; its full sequence is Small ribosomal subunit protein bS20 (88 aa).

Residues 1-27 (MANSKSAKKRALQSEKRRQHNASRRSM) are disordered.

Belongs to the bacterial ribosomal protein bS20 family.

Functionally, binds directly to 16S ribosomal RNA. This Shewanella baltica (strain OS223) protein is Small ribosomal subunit protein bS20.